The chain runs to 535 residues: Alpha-1,3-mannosyl-glycoprotein 4-beta-N-acetylglucosaminyltransferase A (535 aa).

The Cytoplasmic portion of the chain corresponds to 1–6; it reads MRLRNG. Residues 7-27 traverse the membrane as a helical; Signal-anchor for type II membrane protein segment; sequence TVATALVFVTSFLTLSWYTTW. A coiled-coil region spans residues 28–63; the sequence is QNGKEKLIAYQREFLALKERLRVAEHRISQRSSELN. Residues 28-535 lie on the Lumenal side of the membrane; the sequence is QNGKEKLIAY…NEIHIKKVTS (508 aa). 2 N-linked (GlcNAc...) asparagine glycosylation sites follow: Asn-77 and Asn-458. A Phosphoserine modification is found at Ser-474.

It belongs to the glycosyltransferase 54 family. A divalent metal cation serves as cofactor. Post-translationally, N-glycosylated.

The protein localises to the golgi apparatus membrane. The protein resides in the secreted. It catalyses the reaction N(4)-{beta-D-GlcNAc-(1-&gt;2)-alpha-D-Man-(1-&gt;3)-[beta-D-GlcNAc-(1-&gt;2)-alpha-D-Man-(1-&gt;6)]-beta-D-Man-(1-&gt;4)-beta-D-GlcNAc-(1-&gt;4)-beta-D-GlcNAc}-L-asparaginyl-[protein] + UDP-N-acetyl-alpha-D-glucosamine = N(4)-{beta-D-GlcNAc-(1-&gt;2)-[beta-D-GlcNAc-(1-&gt;4)]-alpha-D-Man-(1-&gt;3)-[beta-D-GlcNAc-(1-&gt;2)-alpha-D-Man-(1-&gt;6)]-beta-D-Man-(1-&gt;4)-beta-D-GlcNAc-(1-&gt;4)-beta-D-GlcNAc}-L-asparaginyl-[protein] + UDP + H(+). It carries out the reaction an N(4)-{beta-D-GlcNAc-(1-&gt;2)-alpha-D-Man-(1-&gt;3)-[alpha-D-Man-(1-&gt;6)]-beta-D-Man-(1-&gt;4)-beta-D-GlcNAc-(1-&gt;4)-beta-D-GlcNAc}-L-asparaginyl-[protein] + UDP-N-acetyl-alpha-D-glucosamine = an N(4)-{beta-D-GlcNAc-(1-&gt;2)-[beta-D-GlcNAc-(1-&gt;4)]-alpha-D-Man-(1-&gt;3)-[alpha-D-Man-(1-&gt;6)]-beta-D-Man-(1-&gt;4)-beta-D-GlcNAc-(1-&gt;4)-beta-D-GlcNAc}-L-asparaginyl-[protein] + UDP + H(+). The catalysed reaction is an N(4)-{beta-D-GlcNAc-(1-&gt;2)-alpha-D-Man-(1-&gt;3)-[beta-D-GlcNAc-(1-&gt;2)-[beta-D-GlcNAc-(1-&gt;6)]-alpha-D-Man-(1-&gt;6)]-beta-D-Man-(1-&gt;4)-beta-D-GlcNAc-(1-&gt;4)-beta-D-GlcNAc}-L-asparaginyl-[protein] + UDP-N-acetyl-alpha-D-glucosamine = an N(4)-{beta-D-GlcNAc-(1-&gt;2)-[beta-D-GlcNAc-(1-&gt;4)]-alpha-D-Man-(1-&gt;3)-[beta-D-GlcNAc-(1-&gt;2)-[beta-D-GlcNAc-(1-&gt;6)]-alpha-D-Man-(1-&gt;6)]-beta-D-Man-(1-&gt;4)-beta-D-GlcNAc-(1-&gt;4)-beta-D-GlcNAc}-L-asparaginyl-[protein] + UDP + H(+). The enzyme catalyses an N(4)-{beta-D-GlcNAc-(1-&gt;2)-alpha-D-Man-(1-&gt;3)-[beta-D-GlcNAc-(1-&gt;2)-alpha-D-Man-(1-&gt;6)]-beta-D-Man-(1-&gt;4)-beta-D-GlcNAc-(1-&gt;4)-[alpha-L-Fuc-(1-&gt;6)]-beta-D-GlcNAc}-L-asparaginyl-[protein] + UDP-N-acetyl-alpha-D-glucosamine = N(4)-{beta-D-GlcNAc-(1-&gt;2)-[beta-D-GlcNAc-(1-&gt;4)]-alpha-D-Man-(1-&gt;3)-[beta-D-GlcNAc-(1-&gt;2)-alpha-D-Man-(1-&gt;6)]-beta-D-Man-(1-&gt;4)-beta-D-GlcNAc-(1-&gt;4)-[alpha-L-Fuc-(1-&gt;6)]-beta-D-GlcNAc}-asparaginyl-[protein] + UDP + H(+). It catalyses the reaction an N(4)-{beta-D-GlcNAc-(1-&gt;2)-alpha-D-Man-(1-&gt;3)-[beta-D-Gal-(1-&gt;4)-beta-D-GlcNAc-(1-&gt;2)-alpha-D-Man-(1-&gt;6)]-beta-D-Man-(1-&gt;4)-beta-D-GlcNAc-(1-&gt;4)-beta-D-GlcNAc}-L-asparaginyl-[protein] + UDP-N-acetyl-alpha-D-glucosamine = an N(4)-{beta-D-GlcNAc-(1-&gt;2)-[beta-D-GlcNAc-(1-&gt;4)]-alpha-D-Man-(1-&gt;3)-[beta-D-Gal-(1-&gt;4)-beta-D-GlcNAc-(1-&gt;2)-alpha-D-Man-(1-&gt;6)]-beta-D-Man-(1-&gt;4)-beta-D-GlcNAc-(1-&gt;4)-beta-D-GlcNAc}-L-asparaginyl-[protein] + UDP + H(+). It carries out the reaction N(4)-{beta-D-GlcNAc-(1-&gt;2)-alpha-D-Man-(1-&gt;3)-[alpha-D-Man-(1-&gt;3)-{alpha-D-Man-(1-&gt;6)}-alpha-D-Man-(1-&gt;6)]-beta-D-Man-(1-&gt;4)-beta-D-GlcNAc-(1-&gt;4)-beta-D-GlcNAc}-asparaginyl-[protein] + UDP-N-acetyl-alpha-D-glucosamine = N(4)-{beta-D-GlcNAc-(1-&gt;2)-[beta-D-GlcNAc-(1-&gt;4)]-alpha-D-Man-(1-&gt;3)-[alpha-D-Man-(1-&gt;3)-{alpha-D-Man-(1-&gt;6)}-alpha-D-Man-(1-&gt;6)]-beta-D-Man-(1-&gt;4)-beta-D-GlcNAc-(1-&gt;4)-beta-D-GlcNAc}-asparaginyl-[protein] + UDP + H(+). The catalysed reaction is N(4)-{beta-D-GlcNAc-(1-&gt;2)-alpha-D-Man-(1-&gt;3)-beta-D-Man-(1-&gt;4)-beta-D-GlcNAc-(1-&gt;4)-beta-D-GlcNAc}-asparaginyl-[protein] + UDP-N-acetyl-alpha-D-glucosamine = N(4)-{beta-D-GlcNAc-(1-&gt;2)-[beta-D-GlcNAc-(1-&gt;4)]-alpha-D-Man-(1-&gt;3)-beta-D-Man-(1-&gt;4)-beta-D-GlcNAc-(1-&gt;4)-beta-D-GlcNAc}-asparaginyl-[protein] + UDP + H(+). It participates in protein modification; protein glycosylation. With respect to regulation, inhibited by UDP. In terms of biological role, glycosyltransferase that catalyze the transfer of GlcNAc from UDP-GlcNAc to the GlcNAcbeta1-2Manalpha1-3 arm of the core structure of N-linked glycans through a beta1-4 linkage and participates in the production of tri- and tetra-antennary N-linked sugar chains. Involved in glucose transport by mediating SLC2A2/GLUT2 glycosylation, thereby controlling cell-surface expression of SLC2A2 in pancreatic beta cells. The sequence is that of Alpha-1,3-mannosyl-glycoprotein 4-beta-N-acetylglucosaminyltransferase A from Mus musculus (Mouse).